A 449-amino-acid polypeptide reads, in one-letter code: tRNA modification GTPase MnmE (449 aa).

Positions 24, 81, and 121 each coordinate (6S)-5-formyl-5,6,7,8-tetrahydrofolate. The 158-residue stretch at 218 to 375 folds into the TrmE-type G domain; it reads GLVVAITGPP…LIAALGKFAA (158 aa). GTP is bound by residues 228–233, 247–253, and 272–275; these read NVGKST, SPHAGTT, and DTAG. The Mg(2+) site is built by serine 232 and threonine 253. Lysine 449 contacts (6S)-5-formyl-5,6,7,8-tetrahydrofolate.

The protein belongs to the TRAFAC class TrmE-Era-EngA-EngB-Septin-like GTPase superfamily. TrmE GTPase family. As to quaternary structure, homodimer. Heterotetramer of two MnmE and two MnmG subunits. It depends on K(+) as a cofactor.

Its subcellular location is the cytoplasm. Functionally, exhibits a very high intrinsic GTPase hydrolysis rate. Involved in the addition of a carboxymethylaminomethyl (cmnm) group at the wobble position (U34) of certain tRNAs, forming tRNA-cmnm(5)s(2)U34. This Rhodopseudomonas palustris (strain BisB18) protein is tRNA modification GTPase MnmE.